Consider the following 207-residue polypeptide: Uracil phosphoribosyltransferase (207 aa).

Residues arginine 77, arginine 102, and 129–137 (DPMLATGGS) each bind 5-phospho-alpha-D-ribose 1-diphosphate. Uracil is bound by residues isoleucine 192 and 197 to 199 (GDA). Aspartate 198 is a 5-phospho-alpha-D-ribose 1-diphosphate binding site.

Belongs to the UPRTase family. The cofactor is Mg(2+).

The catalysed reaction is UMP + diphosphate = 5-phospho-alpha-D-ribose 1-diphosphate + uracil. It participates in pyrimidine metabolism; UMP biosynthesis via salvage pathway; UMP from uracil: step 1/1. Allosterically activated by GTP. Its function is as follows. Catalyzes the conversion of uracil and 5-phospho-alpha-D-ribose 1-diphosphate (PRPP) to UMP and diphosphate. The protein is Uracil phosphoribosyltransferase of Mycoplasma mycoides subsp. mycoides SC (strain CCUG 32753 / NCTC 10114 / PG1).